A 309-amino-acid chain; its full sequence is Foldase protein PrsA 2 (309 aa).

A signal peptide spans 1–22; it reads MKQMNKLITGVVTLATVVTLSA. Cysteine 23 carries the N-palmitoyl cysteine lipid modification. Cysteine 23 is lipidated: S-diacylglycerol cysteine. Residues 146 to 241 enclose the PpiC domain; the sequence is TPTMTAEIMQ…RTYHIIKVTK (96 aa).

Belongs to the PrsA family.

The protein localises to the cell membrane. It carries out the reaction [protein]-peptidylproline (omega=180) = [protein]-peptidylproline (omega=0). Functionally, plays a major role in protein secretion by helping the post-translocational extracellular folding of several secreted proteins. This is Foldase protein PrsA 2 (prsA2) from Streptococcus pyogenes serotype M3 (strain ATCC BAA-595 / MGAS315).